The primary structure comprises 376 residues: CC-adding tRNA nucleotidyltransferase (376 aa).

26–29 (GAVR) provides a ligand contact to CTP. Mg(2+) contacts are provided by Asp-39 and Asp-41. Residues 94-95 (RD), Asn-99, 136-145 (DPLRMLRAAR), and Arg-176 each bind CTP.

The protein belongs to the tRNA nucleotidyltransferase/poly(A) polymerase family. Mg(2+) serves as cofactor.

It catalyses the reaction a tRNA precursor + 2 CTP = a tRNA with a 3' CC end + 2 diphosphate. TRNA nucleotidyltransferase involved in the synthesis of the tRNA CCA terminus. Adds the two cytidine residues to tRNA. This chain is CC-adding tRNA nucleotidyltransferase, found in Shouchella clausii (strain KSM-K16) (Alkalihalobacillus clausii).